The chain runs to 298 residues: Acidic endochitinase (298 aa).

Positions 1–29 are cleaved as a signal peptide; the sequence is MKPNMACLKQVSALLLPLLFISFFKPSHA. Residues 30–298 enclose the GH18 domain; the sequence is GGISVYWGQN…GYSGAIIGSV (269 aa). 2 cysteine pairs are disulfide-bonded: cysteine 49–cysteine 96 and cysteine 79–cysteine 86. Glutamate 156 acts as the Proton donor in catalysis. A disulfide bridge connects residues cysteine 185 and cysteine 214.

Belongs to the glycosyl hydrolase 18 family. Chitinase class II subfamily.

Its subcellular location is the secreted. It localises to the extracellular space. It catalyses the reaction Random endo-hydrolysis of N-acetyl-beta-D-glucosaminide (1-&gt;4)-beta-linkages in chitin and chitodextrins.. In terms of biological role, this protein functions as a defense against chitin containing fungal pathogens. This is Acidic endochitinase from Phaseolus angularis (Azuki bean).